Reading from the N-terminus, the 563-residue chain is Arginine--tRNA ligase (563 aa).

The short motif at 121 to 131 (PNIAKPFSIGH) is the 'HIGH' region element.

The protein belongs to the class-I aminoacyl-tRNA synthetase family. In terms of assembly, monomer.

It localises to the cytoplasm. It carries out the reaction tRNA(Arg) + L-arginine + ATP = L-arginyl-tRNA(Arg) + AMP + diphosphate. In Streptococcus equi subsp. equi (strain 4047), this protein is Arginine--tRNA ligase.